The sequence spans 278 residues: Elongation factor Ts (278 aa).

The involved in Mg(2+) ion dislocation from EF-Tu stretch occupies residues 79 to 82; sequence TDFV.

The protein belongs to the EF-Ts family.

It localises to the cytoplasm. In terms of biological role, associates with the EF-Tu.GDP complex and induces the exchange of GDP to GTP. It remains bound to the aminoacyl-tRNA.EF-Tu.GTP complex up to the GTP hydrolysis stage on the ribosome. The polypeptide is Elongation factor Ts (Borrelia hermsii (strain HS1 / DAH)).